The primary structure comprises 251 residues: Phosphoribosylaminoimidazole-succinocarboxamide synthase (251 aa).

Belongs to the SAICAR synthetase family.

The enzyme catalyses 5-amino-1-(5-phospho-D-ribosyl)imidazole-4-carboxylate + L-aspartate + ATP = (2S)-2-[5-amino-1-(5-phospho-beta-D-ribosyl)imidazole-4-carboxamido]succinate + ADP + phosphate + 2 H(+). Its pathway is purine metabolism; IMP biosynthesis via de novo pathway; 5-amino-1-(5-phospho-D-ribosyl)imidazole-4-carboxamide from 5-amino-1-(5-phospho-D-ribosyl)imidazole-4-carboxylate: step 1/2. In Ruegeria pomeroyi (strain ATCC 700808 / DSM 15171 / DSS-3) (Silicibacter pomeroyi), this protein is Phosphoribosylaminoimidazole-succinocarboxamide synthase.